A 252-amino-acid chain; its full sequence is Flagellar L-ring protein (252 aa).

A signal peptide spans 1–25 (MLKLASLNRIVLTGTLLAAAGLASG). A lipid anchor (N-palmitoyl cysteine) is attached at Cys-26. The S-diacylglycerol cysteine moiety is linked to residue Cys-26.

It belongs to the FlgH family. In terms of assembly, the basal body constitutes a major portion of the flagellar organelle and consists of four rings (L,P,S, and M) mounted on a central rod.

The protein localises to the cell outer membrane. It localises to the bacterial flagellum basal body. Assembles around the rod to form the L-ring and probably protects the motor/basal body from shearing forces during rotation. This Nitrobacter winogradskyi (strain ATCC 25391 / DSM 10237 / CIP 104748 / NCIMB 11846 / Nb-255) protein is Flagellar L-ring protein.